A 155-amino-acid polypeptide reads, in one-letter code: Cardioactive peptide (155 aa).

An N-terminal signal peptide occupies residues 1 to 23 (MRTSMRISLRLLALLACAICSQA). The propeptide occupies 24–49 (SLERENNEGTNMANHKLSGVIQWKYE). Cys54 and Cys60 are disulfide-bonded. Cysteine amide is present on Cys60. Positions 64-155 (RTYPSYPPFS…MQQLEERESK (92 aa)) are excised as a propeptide. The disordered stretch occupies residues 135-155 (NKQKMLQNEKEMQQLEERESK). Residues 141 to 155 (QNEKEMQQLEERESK) show a composition bias toward basic and acidic residues.

Central nervous system; most neurons exhibit coexpression with Burs.

It is found in the secreted. In terms of biological role, cardioregulatory neurohormone that increases heart beat rate during adult wing inflation; has no effect on beat amplitude. The effect of CCAP is both ino- and chronotropic. This Drosophila melanogaster (Fruit fly) protein is Cardioactive peptide.